An 80-amino-acid polypeptide reads, in one-letter code: Putative defensin-like protein 28 (80 aa).

The first 22 residues, 1-22, serve as a signal peptide directing secretion; sequence MLRANVVVSLVIFAALMQCMNG.

Belongs to the DEFL family.

Its subcellular location is the secreted. The protein is Putative defensin-like protein 28 of Arabidopsis thaliana (Mouse-ear cress).